The following is a 283-amino-acid chain: Thymidylate synthase (283 aa).

A dUMP-binding site is contributed by Arg-22. The active-site Nucleophile is the Cys-160. DUMP is bound by residues 180-183 (RSCD), Asn-191, and 221-223 (HIY). A (6R)-5,10-methylene-5,6,7,8-tetrahydrofolate-binding site is contributed by Asp-183. Ser-282 provides a ligand contact to (6R)-5,10-methylene-5,6,7,8-tetrahydrofolate.

Belongs to the thymidylate synthase family. Bacterial-type ThyA subfamily. In terms of assembly, homodimer.

Its subcellular location is the cytoplasm. It carries out the reaction dUMP + (6R)-5,10-methylene-5,6,7,8-tetrahydrofolate = 7,8-dihydrofolate + dTMP. The protein operates within pyrimidine metabolism; dTTP biosynthesis. Functionally, catalyzes the reductive methylation of 2'-deoxyuridine-5'-monophosphate (dUMP) to 2'-deoxythymidine-5'-monophosphate (dTMP) while utilizing 5,10-methylenetetrahydrofolate (mTHF) as the methyl donor and reductant in the reaction, yielding dihydrofolate (DHF) as a by-product. This enzymatic reaction provides an intracellular de novo source of dTMP, an essential precursor for DNA biosynthesis. The chain is Thymidylate synthase from Vibrio parahaemolyticus serotype O3:K6 (strain RIMD 2210633).